The chain runs to 278 residues: Hydroxyethylthiazole kinase (278 aa).

Met-46 provides a ligand contact to substrate. ATP is bound by residues Arg-122 and Thr-168. Gly-195 lines the substrate pocket.

The protein belongs to the Thz kinase family. The cofactor is Mg(2+).

It carries out the reaction 5-(2-hydroxyethyl)-4-methylthiazole + ATP = 4-methyl-5-(2-phosphooxyethyl)-thiazole + ADP + H(+). Its pathway is cofactor biosynthesis; thiamine diphosphate biosynthesis; 4-methyl-5-(2-phosphoethyl)-thiazole from 5-(2-hydroxyethyl)-4-methylthiazole: step 1/1. Catalyzes the phosphorylation of the hydroxyl group of 4-methyl-5-beta-hydroxyethylthiazole (THZ). This Chloroflexus aggregans (strain MD-66 / DSM 9485) protein is Hydroxyethylthiazole kinase.